Consider the following 793-residue polypeptide: Facilitated trehalose transporter Tret1 (793 aa).

Residues 1 to 326 (MNRKVGPVLE…LEVYRPTTNP (326 aa)) are Cytoplasmic-facing. 2 disordered regions span residues 99-148 (EKAK…EHKS) and 213-235 (RHIS…FEPS). Residues 104-113 (KSSLKSSRVS) show a composition bias toward low complexity. Positions 115 to 125 (DQEDDRFDEDE) are enriched in acidic residues. A compositionally biased stretch (basic and acidic residues) spans 213-223 (RHISFKFDKEP). A helical transmembrane segment spans residues 327 to 347 (IYIWTQVLAALSVSLGSMVVG). The Extracellular portion of the chain corresponds to 348 to 376 (FSSAYTSPALVSMKDRNITSFEVTDQSGS). Asn-364 carries an N-linked (GlcNAc...) asparagine glycan. Residues 377–397 (WVGGIMPLAGLAGGILGGPMI) traverse the membrane as a helical segment. Residues 398–411 (EYLGRKNTILATAT) lie on the Cytoplasmic side of the membrane. Residues 412-432 (PFIISWLLIGCATHVAMVLVG) traverse the membrane as a helical segment. The Extracellular portion of the chain corresponds to 433 to 434 (RA). A helical transmembrane segment spans residues 435-455 (LSGLCVGIASLSLPVYLGETV). Residues 456 to 460 (QPEVR) lie on the Cytoplasmic side of the membrane. Residues 461-481 (GTLGLLPTAFGNIGILLCFVA) form a helical membrane-spanning segment. Residues 482–488 (GKYLDWS) are Extracellular-facing. A helical transmembrane segment spans residues 489-509 (GLAFLGAALPIPFLLLMFLIP). Residues 510–572 (ETPRWYVSRN…DLLNKANLKP (63 aa)) lie on the Cytoplasmic side of the membrane. A helical membrane pass occupies residues 573 to 593 (LLISLGLMFFQQLSGINAVIF). At 594 to 609 (YTVQIFQSAGSTIDEK) the chain is on the extracellular side. A helical membrane pass occupies residues 610–630 (LCTIIVGVVNFIATFIATVLI). Over 631 to 636 (DRLGRK) the chain is Cytoplasmic. A helical membrane pass occupies residues 637–657 (ILLYISDVAMIITLMTLGTFF). Residues 658–668 (YMKNNGDDVSE) lie on the Extracellular side of the membrane. A helical transmembrane segment spans residues 669 to 689 (IGWLPLAAFVVFVVGFSLGFG). Residues 690–703 (PIPWLMMGEILPGK) lie on the Cytoplasmic side of the membrane. Residues 704–724 (IRGSAASVATAFNWSCTFVVT) traverse the membrane as a helical segment. Topologically, residues 725–737 (KTFADITASIGNH) are extracellular. The helical transmembrane segment at 738–758 (GAFWMFGSICIVGLLFVIVYV) threads the bilayer. Over 759–793 (PETQGKSLEDIERKMMGRVRRMSSVANIKPLSFNM) the chain is Cytoplasmic.

Belongs to the major facilitator superfamily. Sugar transporter (TC 2.A.1.1) family. Trehalose transporter subfamily.

The protein resides in the cell membrane. High-capacity facilitative transporter for trehalose. Does not transport maltose, sucrose or lactose. Mediates the bidirectional transfer of trehalose. Responsible for the transport of trehalose synthesized in the fat body and the incorporation of trehalose into other tissues that require a carbon source, thereby regulating trehalose levels in the hemolymph. This Anopheles gambiae (African malaria mosquito) protein is Facilitated trehalose transporter Tret1.